We begin with the raw amino-acid sequence, 198 residues long: MMVKLICAIVDIAGAAFPIDIDTNELVGDFKKVIKAENSRTIACDANDLRLFLAKTDGRWLTEFEVQNGVADISVFEELDVVGAPLNMIGLSEETVSSVAITKELVKAKKTPLHVLVVPSEPVQLQRKLWLVTGTVVNALGSKGIRRHLHLMASLHIGFYDPTRRVDNKNVAFWYEAKNLCFHVLFKSSTCFFYVSPF.

The N-terminal stretch at 1-15 (MMVKLICAIVDIAGA) is a signal peptide. Residues 16-55 (AFPIDIDTNELVGDFKKVIKAENSRTIACDANDLRLFLAK) are LQLFLAK domain. Residues 56-113 (TDGRWLTEFEVQNGVADISVFEELDVVGAPLNMIGLSEETVSSVAITKELVKAKKTPL) are DWL domain. The short motif at 114–119 (HVLVVP) is the HVLVXXP motif element.

Belongs to the Crinkler effector family.

Its subcellular location is the secreted. It is found in the host cell. Its function is as follows. Secreted effector that elicits necrosis in host plants, a characteristic of plant innate immunity. This chain is Crinkler effector protein BLC01, found in Bremia lactucae (Lettuce downy mildew).